Reading from the N-terminus, the 725-residue chain is Catalase-peroxidase (725 aa).

Residues 1 to 20 are disordered; it reads MSSEAKCPFPHAANRSRSNQ. A cross-link (tryptophyl-tyrosyl-methioninium (Trp-Tyr) (with M-241)) is located at residues 91–215; sequence WHATGTYRTM…LSATHMGLIY (125 aa). The active-site Proton acceptor is histidine 92. The segment at residues 215–241 is a cross-link (tryptophyl-tyrosyl-methioninium (Tyr-Met) (with W-91)); sequence YVNPEGPDGSGDYMAAAKDIRATFYRM. Residue histidine 256 coordinates heme b.

Belongs to the peroxidase family. Peroxidase/catalase subfamily. Homodimer or homotetramer. Heme b serves as cofactor. Post-translationally, formation of the three residue Trp-Tyr-Met cross-link is important for the catalase, but not the peroxidase activity of the enzyme.

The enzyme catalyses H2O2 + AH2 = A + 2 H2O. The catalysed reaction is 2 H2O2 = O2 + 2 H2O. In terms of biological role, bifunctional enzyme with both catalase and broad-spectrum peroxidase activity. This Janthinobacterium sp. (strain Marseille) (Minibacterium massiliensis) protein is Catalase-peroxidase.